The sequence spans 333 residues: Sphingomyelinase C (333 aa).

The first 26 residues, 1–26 (MKGKLLKGVLSLGVGLGALYSGTSAQ), serve as a signal peptide directing secretion. Residues C150 and C186 are joined by a disulfide bond.

It belongs to the neutral sphingomyelinase family. Requires Mg(2+) as cofactor. The N-terminus is blocked.

The protein resides in the secreted. It catalyses the reaction a sphingomyelin + H2O = phosphocholine + an N-acylsphing-4-enine + H(+). Its activity is regulated as follows. Activated by cobalt and manganese ions. Functionally, required, with sphingomyelinase, to effect target cell lysis (hemolysis). In Bacillus cereus, this protein is Sphingomyelinase C (cerB).